Consider the following 69-residue polypeptide: Cytochrome c oxidase subunit 8A, mitochondrial (69 aa).

The N-terminal 25 residues, 1-25 (MSVLTSLLLRGLTGSARRLPVPRAK), are a transit peptide targeting the mitochondrion. The short motif at 2-19 (SVLTSLLLRGLTGSARRL) is the SIFI-degron element. Residues 26–36 (VHSMPPEEELG) lie on the Mitochondrial matrix side of the membrane. The chain crosses the membrane as a helical span at residues 37 to 60 (TLEKAIALTSCFVSLFLPAGWILS). Residues 61–69 (HLEDYKRPE) are Mitochondrial intermembrane-facing.

The protein belongs to the cytochrome c oxidase VIII family. Component of the cytochrome c oxidase (complex IV, CIV), a multisubunit enzyme composed of 14 subunits. The complex is composed of a catalytic core of 3 subunits MT-CO1, MT-CO2 and MT-CO3, encoded in the mitochondrial DNA, and 11 supernumerary subunits COX4I, COX5A, COX5B, COX6A, COX6B, COX6C, COX7A, COX7B, COX7C, COX8 and NDUFA4, which are encoded in the nuclear genome. The complex exists as a monomer or a dimer and forms supercomplexes (SCs) in the inner mitochondrial membrane with NADH-ubiquinone oxidoreductase (complex I, CI) and ubiquinol-cytochrome c oxidoreductase (cytochrome b-c1 complex, complex III, CIII), resulting in different assemblies (supercomplex SCI(1)III(2)IV(1) and megacomplex MCI(2)III(2)IV(2)). In response to mitochondrial stress, the precursor protein is ubiquitinated by the SIFI complex in the cytoplasm before mitochondrial import, leading to its degradation. Within the SIFI complex, UBR4 initiates ubiquitin chain that are further elongated or branched by KCMF1.

It localises to the mitochondrion inner membrane. It participates in energy metabolism; oxidative phosphorylation. Component of the cytochrome c oxidase, the last enzyme in the mitochondrial electron transport chain which drives oxidative phosphorylation. The respiratory chain contains 3 multisubunit complexes succinate dehydrogenase (complex II, CII), ubiquinol-cytochrome c oxidoreductase (cytochrome b-c1 complex, complex III, CIII) and cytochrome c oxidase (complex IV, CIV), that cooperate to transfer electrons derived from NADH and succinate to molecular oxygen, creating an electrochemical gradient over the inner membrane that drives transmembrane transport and the ATP synthase. Cytochrome c oxidase is the component of the respiratory chain that catalyzes the reduction of oxygen to water. Electrons originating from reduced cytochrome c in the intermembrane space (IMS) are transferred via the dinuclear copper A center (CU(A)) of subunit 2 and heme A of subunit 1 to the active site in subunit 1, a binuclear center (BNC) formed by heme A3 and copper B (CU(B)). The BNC reduces molecular oxygen to 2 water molecules using 4 electrons from cytochrome c in the IMS and 4 protons from the mitochondrial matrix. The chain is Cytochrome c oxidase subunit 8A, mitochondrial (COX8A) from Papio anubis (Olive baboon).